The following is a 194-amino-acid chain: Auxin-induced protein 22A (194 aa).

The EAR-like (transcriptional repression) signature appears at 13 to 17 (LRLGL). The disordered stretch occupies residues 40–62 (EIDDVGDENSSSGGGGDRKMENK). The PB1 domain occupies 85 to 173 (KMYVKVSMDG…KRLRIMKRAD (89 aa)).

Belongs to the Aux/IAA family. In terms of assembly, homodimers and heterodimers.

The protein resides in the nucleus. Functionally, aux/IAA proteins are short-lived transcriptional factors that function as repressors of early auxin response genes at low auxin concentrations. Repression is thought to result from the interaction with auxin response factors (ARFs), proteins that bind to the auxin-responsive promoter element (AuxRE). Formation of heterodimers with ARF proteins may alter their ability to modulate early auxin response genes expression. This chain is Auxin-induced protein 22A (AUX22A), found in Vigna radiata var. radiata (Mung bean).